The primary structure comprises 290 residues: Xyloglucan endotransglycosylase/hydrolase protein 8 (290 aa).

The signal sequence occupies residues 1–25 (MAKHLALSVAAAVAVSWLAASSAAA). Positions 26-218 (AGFYEKFDVV…WSGAPFVVSY (193 aa)) constitute a GH16 domain. The active-site Nucleophile is the glutamate 106. The active-site Proton donor is the glutamate 110. Glutamate 110 contributes to the xyloglucan binding site. An N-linked (GlcNAc...) asparagine glycan is attached at asparagine 114. Residues 123–125 (NTN), 133–135 (KKE), and 197–198 (YW) each bind xyloglucan. 2 disulfides stabilise this stretch: cysteine 226-cysteine 240 and cysteine 273-cysteine 287. Arginine 278 lines the xyloglucan pocket.

Belongs to the glycosyl hydrolase 16 family. XTH group 2 subfamily. Post-translationally, contains at least one intrachain disulfide bond essential for its enzymatic activity. In terms of tissue distribution, transcript strongly detected in leaf sheaths. Weakly or not expressed in leaf blades, roots and calli. Accumulation of transcript detected in shoot apex meristem, vascular tissues, young leaves, vascular bundles of leaf sheaths, and peripheral cylinder of the vascular bundles and fibers in the nodal region.

The protein resides in the secreted. It localises to the cell wall. The protein localises to the extracellular space. It is found in the apoplast. It carries out the reaction breaks a beta-(1-&gt;4) bond in the backbone of a xyloglucan and transfers the xyloglucanyl segment on to O-4 of the non-reducing terminal glucose residue of an acceptor, which can be a xyloglucan or an oligosaccharide of xyloglucan.. Functionally, catalyzes xyloglucan endohydrolysis (XEH) and/or endotransglycosylation (XET). Cleaves and religates xyloglucan polymers, an essential constituent of the primary cell wall, and thereby participates in cell wall construction of growing tissues. May promote elongation of three internodes (II, III and IV) and may be involved in cell elongation processes. In Oryza sativa subsp. japonica (Rice), this protein is Xyloglucan endotransglycosylase/hydrolase protein 8 (XTH8).